Here is a 125-residue protein sequence, read N- to C-terminus: Small ribosomal subunit protein uS12m (125 aa).

This sequence belongs to the universal ribosomal protein uS12 family.

The protein localises to the mitochondrion. In terms of biological role, protein S12 is involved in the translation initiation step. In Helianthus annuus (Common sunflower), this protein is Small ribosomal subunit protein uS12m (RPS12).